We begin with the raw amino-acid sequence, 533 residues long: NEDD8-activating enzyme E1 regulatory subunit (533 aa).

Residues 330-343 (DMIADSDKFIKLQN) are interaction with uba3.

Belongs to the ubiquitin-activating E1 family. ULA1 subfamily. In terms of assembly, heterodimer of uba3 and nae1. The complex binds nedd8 and ube2m.

It functions in the pathway protein modification; protein neddylation. Functionally, regulatory subunit of the dimeric uba3-nae1 E1 enzyme. E1 activates nedd8 by first adenylating its C-terminal glycine residue with ATP, thereafter linking this residue to the side chain of the catalytic cysteine, yielding a nedd8-uba3 thioester and free AMP. E1 finally transfers nedd8 to the catalytic cysteine of ube2m. The covalent attachment of nedd8 to target proteins is known as 'neddylation' and the process is involved in the regulation of cell growth, viability and development. This Xenopus laevis (African clawed frog) protein is NEDD8-activating enzyme E1 regulatory subunit (nae1).